The primary structure comprises 384 residues: Gastrin-releasing peptide receptor (384 aa).

At 1 to 38 the chain is on the extracellular side; sequence MALNDCFLLNLEVDHFMHCNISSHSADLPVNDDWSHPG. A glycan (N-linked (GlcNAc...) asparagine) is linked at Asn-20. A helical membrane pass occupies residues 39–62; that stretch reads ILYVIPAVYGVIILIGLIGNITLI. Topologically, residues 63 to 76 are cytoplasmic; that stretch reads KIFCTVKSMRNVPN. A helical transmembrane segment spans residues 77 to 96; sequence LFISSLALGDLLLLITCAPV. Topologically, residues 97–114 are extracellular; sequence DASRYLADRWLFGRIGCK. Cys-113 and Cys-196 are joined by a disulfide. The helical transmembrane segment at 115–136 threads the bilayer; that stretch reads LIPFIQLTSVGVSVFTLTALSA. The Cytoplasmic segment spans residues 137 to 152; it reads DRYKAIVRPMDIQASH. A helical membrane pass occupies residues 153 to 174; sequence ALMKICLKAAFIWIISMLLAIP. Residues 175 to 208 lie on the Extracellular side of the membrane; the sequence is EAVFSDLHPFHEESTNQTFISCAPYPHSNELHPK. A helical transmembrane segment spans residues 209–234; it reads IHSMASFLVFYVIPLSIISVYYYFIA. Over 235 to 264 the chain is Cytoplasmic; it reads KNLIQSAYNLPVEGNIHVKKQIESRKRLAK. The helical transmembrane segment at 265–285 threads the bilayer; that stretch reads TVLVFVGLFAFCWLPNHVIYL. At 286 to 298 the chain is on the extracellular side; the sequence is YRSYHYSEVDTSM. A helical transmembrane segment spans residues 299 to 325; that stretch reads LHFVTSICARLLAFTNSCVNPFALYLL. Topologically, residues 326 to 384 are cytoplasmic; sequence SKSFRKQFNTQLLCCQPGLIIRSHSTGRSTTCMTSLKSTNPSVATFSLINGNICHERYV. A lipid anchor (S-palmitoyl cysteine) is attached at Cys-339. Ser-350 is modified (phosphoserine).

The protein belongs to the G-protein coupled receptor 1 family. Highly expressed in pancreas. Also expressed in stomach, adrenal cortex and brain. In brain, expressed in cells throughout the cortex.

The protein resides in the cell membrane. Its function is as follows. Receptor for gastrin-releasing peptide (GRP). Signals via association with G proteins that activate a phosphatidylinositol-calcium second messenger system, resulting in Akt phosphorylation. Contributes to the regulation of food intake. Contributes to the perception of prurient stimuli and transmission of itch signals in the spinal cord that promote scratching behavior, but does not play a role in the perception of pain. Contributes primarily to nonhistaminergic itch sensation. In one study, shown to act in the amygdala as part of an inhibitory network which inhibits memory specifically related to learned fear. In another study, shown to contribute to disinhibition of glutamatergic cells in the auditory cortex via signaling on vasoactive intestinal peptide-expressing cells which leads to enhanced auditory fear memories. Contributes to the induction of sighing through signaling in the pre-Botzinger complex, a cluster of several thousand neurons in the ventrolateral medulla responsible for inspiration during respiratory activity. This chain is Gastrin-releasing peptide receptor (GRPR), found in Homo sapiens (Human).